A 104-amino-acid chain; its full sequence is Integration host factor subunit beta (104 aa).

Residues 83-95 (GKEMRERLNRDSG) are compositionally biased toward basic and acidic residues. The disordered stretch occupies residues 83 to 104 (GKEMRERLNRDSGDDAPTSDTA).

It belongs to the bacterial histone-like protein family. As to quaternary structure, heterodimer of an alpha and a beta chain.

In terms of biological role, this protein is one of the two subunits of integration host factor, a specific DNA-binding protein that functions in genetic recombination as well as in transcriptional and translational control. The protein is Integration host factor subunit beta of Rhodopseudomonas palustris (strain ATCC BAA-98 / CGA009).